The following is a 220-amino-acid chain: Adapter protein MecA (220 aa).

Belongs to the MecA family. As to quaternary structure, homodimer.

Its function is as follows. Enables the recognition and targeting of unfolded and aggregated proteins to the ClpC protease or to other proteins involved in proteolysis. This Enterococcus faecalis (strain ATCC 700802 / V583) protein is Adapter protein MecA.